We begin with the raw amino-acid sequence, 544 residues long: Probable protein kinase UbiB (544 aa).

Positions 123-501 constitute a Protein kinase domain; it reads EFDIKPLASA…KRQQATGKFL (379 aa). ATP is bound by residues 129–137 and lysine 152; that span reads LASASIAQV. Residue aspartate 287 is the Proton acceptor of the active site. 2 helical membrane passes run 496–516 and 519–539; these read ATGK…AILV and AYEQ…LLSW.

Belongs to the ABC1 family. UbiB subfamily.

It is found in the cell inner membrane. The protein operates within cofactor biosynthesis; ubiquinone biosynthesis [regulation]. Functionally, is probably a protein kinase regulator of UbiI activity which is involved in aerobic coenzyme Q (ubiquinone) biosynthesis. This is Probable protein kinase UbiB from Vibrio campbellii (strain ATCC BAA-1116).